The following is a 428-amino-acid chain: 3-phosphoshikimate 1-carboxyvinyltransferase (428 aa).

3-phosphoshikimate-binding residues include K19, S20, and R24. K19 contributes to the phosphoenolpyruvate binding site. 2 residues coordinate phosphoenolpyruvate: G91 and R119. 3-phosphoshikimate-binding residues include S164, Q166, D312, and K339. Q166 is a phosphoenolpyruvate binding site. The active-site Proton acceptor is the D312. Residues R343 and R386 each contribute to the phosphoenolpyruvate site.

It belongs to the EPSP synthase family. In terms of assembly, monomer.

The protein resides in the cytoplasm. The enzyme catalyses 3-phosphoshikimate + phosphoenolpyruvate = 5-O-(1-carboxyvinyl)-3-phosphoshikimate + phosphate. The protein operates within metabolic intermediate biosynthesis; chorismate biosynthesis; chorismate from D-erythrose 4-phosphate and phosphoenolpyruvate: step 6/7. Catalyzes the transfer of the enolpyruvyl moiety of phosphoenolpyruvate (PEP) to the 5-hydroxyl of shikimate-3-phosphate (S3P) to produce enolpyruvyl shikimate-3-phosphate and inorganic phosphate. The chain is 3-phosphoshikimate 1-carboxyvinyltransferase from Bacillus velezensis (strain DSM 23117 / BGSC 10A6 / LMG 26770 / FZB42) (Bacillus amyloliquefaciens subsp. plantarum).